A 465-amino-acid polypeptide reads, in one-letter code: 3-isopropylmalate dehydratase large subunit (465 aa).

The [4Fe-4S] cluster site is built by C347, C407, and C410.

It belongs to the aconitase/IPM isomerase family. LeuC type 1 subfamily. In terms of assembly, heterodimer of LeuC and LeuD. It depends on [4Fe-4S] cluster as a cofactor.

It carries out the reaction (2R,3S)-3-isopropylmalate = (2S)-2-isopropylmalate. Its pathway is amino-acid biosynthesis; L-leucine biosynthesis; L-leucine from 3-methyl-2-oxobutanoate: step 2/4. Its function is as follows. Catalyzes the isomerization between 2-isopropylmalate and 3-isopropylmalate, via the formation of 2-isopropylmaleate. This Tolumonas auensis (strain DSM 9187 / NBRC 110442 / TA 4) protein is 3-isopropylmalate dehydratase large subunit.